A 413-amino-acid polypeptide reads, in one-letter code: Multifunctional CCA protein (413 aa).

The ATP site is built by Gly8 and Arg11. 2 residues coordinate CTP: Gly8 and Arg11. Residues Asp21 and Asp23 each coordinate Mg(2+). 3 residues coordinate ATP: Arg91, Arg137, and Arg140. CTP-binding residues include Arg91, Arg137, and Arg140. Residues 228–329 (TGKHTLLSLK…VSLFDKGDFW (102 aa)) enclose the HD domain.

This sequence belongs to the tRNA nucleotidyltransferase/poly(A) polymerase family. Bacterial CCA-adding enzyme type 1 subfamily. Monomer. Can also form homodimers and oligomers. The cofactor is Mg(2+). Ni(2+) is required as a cofactor.

The enzyme catalyses a tRNA precursor + 2 CTP + ATP = a tRNA with a 3' CCA end + 3 diphosphate. It carries out the reaction a tRNA with a 3' CCA end + 2 CTP + ATP = a tRNA with a 3' CCACCA end + 3 diphosphate. Functionally, catalyzes the addition and repair of the essential 3'-terminal CCA sequence in tRNAs without using a nucleic acid template. Adds these three nucleotides in the order of C, C, and A to the tRNA nucleotide-73, using CTP and ATP as substrates and producing inorganic pyrophosphate. tRNA 3'-terminal CCA addition is required both for tRNA processing and repair. Also involved in tRNA surveillance by mediating tandem CCA addition to generate a CCACCA at the 3' terminus of unstable tRNAs. While stable tRNAs receive only 3'-terminal CCA, unstable tRNAs are marked with CCACCA and rapidly degraded. The sequence is that of Multifunctional CCA protein from Shewanella denitrificans (strain OS217 / ATCC BAA-1090 / DSM 15013).